Consider the following 228-residue polypeptide: Dolichyl-phosphate hexose transferase HVO_1613 (228 aa).

It belongs to the glycosyltransferase 2 family.

Glycosyltransferase that adds a monosaccharide to dolichol phosphate, thereby being responsible for generating one of the three monosaccharide-modified dolichol phosphates. The subunit onto which additional sugars are added is not known. The chain is Dolichyl-phosphate hexose transferase HVO_1613 from Haloferax volcanii (strain ATCC 29605 / DSM 3757 / JCM 8879 / NBRC 14742 / NCIMB 2012 / VKM B-1768 / DS2) (Halobacterium volcanii).